The primary structure comprises 430 residues: tRNA-2-methylthio-N(6)-dimethylallyladenosine synthase (430 aa).

An MTTase N-terminal domain is found at 1–110; sequence MKVHIFTYGC…VPDAVLNAKN (110 aa). 6 residues coordinate [4Fe-4S] cluster: cysteine 10, cysteine 46, cysteine 75, cysteine 146, cysteine 150, and cysteine 153. Positions 132–363 constitute a Radical SAM core domain; the sequence is RSSNHHAWVT…LNLQKTINKE (232 aa). The region spanning 366–427 is the TRAM domain; that stretch reads KSYLGKEVEV…AGPLYGEIKK (62 aa).

The protein belongs to the methylthiotransferase family. MiaB subfamily. In terms of assembly, monomer. [4Fe-4S] cluster is required as a cofactor.

The protein resides in the cytoplasm. The enzyme catalyses N(6)-dimethylallyladenosine(37) in tRNA + (sulfur carrier)-SH + AH2 + 2 S-adenosyl-L-methionine = 2-methylsulfanyl-N(6)-dimethylallyladenosine(37) in tRNA + (sulfur carrier)-H + 5'-deoxyadenosine + L-methionine + A + S-adenosyl-L-homocysteine + 2 H(+). Catalyzes the methylthiolation of N6-(dimethylallyl)adenosine (i(6)A), leading to the formation of 2-methylthio-N6-(dimethylallyl)adenosine (ms(2)i(6)A) at position 37 in tRNAs that read codons beginning with uridine. This Fervidobacterium nodosum (strain ATCC 35602 / DSM 5306 / Rt17-B1) protein is tRNA-2-methylthio-N(6)-dimethylallyladenosine synthase.